Reading from the N-terminus, the 350-residue chain is Protein-glutamate methylesterase/protein-glutamine glutaminase 1 (350 aa).

The Response regulatory domain occupies arginine 6–glutamate 123. Aspartate 57 bears the 4-aspartylphosphate mark. One can recognise a CheB-type methylesterase domain in the interval leucine 159–alanine 350. Catalysis depends on residues serine 171, histidine 197, and aspartate 293.

This sequence belongs to the CheB family. Phosphorylated by CheA. Phosphorylation of the N-terminal regulatory domain activates the methylesterase activity.

The protein localises to the cytoplasm. It catalyses the reaction [protein]-L-glutamate 5-O-methyl ester + H2O = L-glutamyl-[protein] + methanol + H(+). The catalysed reaction is L-glutaminyl-[protein] + H2O = L-glutamyl-[protein] + NH4(+). Its function is as follows. Involved in chemotaxis. Part of a chemotaxis signal transduction system that modulates chemotaxis in response to various stimuli. Catalyzes the demethylation of specific methylglutamate residues introduced into the chemoreceptors (methyl-accepting chemotaxis proteins or MCP) by CheR. Also mediates the irreversible deamidation of specific glutamine residues to glutamic acid. The chain is Protein-glutamate methylesterase/protein-glutamine glutaminase 1 from Dechloromonas aromatica (strain RCB).